The primary structure comprises 469 residues: MEGSSSGRLRDLPSVDAVLKAPAALAMLERFGRAASTDAVRAALADARAAIAGGASHAPDAAVLARAAEASLEADELSNMRPLFNLTGTVLHTNLGRAVLAEAAIEAAVAAMRDPVALEFDLETGKRGERDDHVRALLCELTGAEDATLVNNNAAAVLLCLNTLAAGREAIVSRGELIEIGGAFRMPDIMARAGAKLVEVGTTNRTHLKDYRVALSAQTGVILKVHTSNYRIEGFTAEVGAAELAALAGQANVPLMNDLGSGTLIDLSRYGLQREPTVREAVREGSGLVTFSGDKLLGGPQAGFIVGARALIEAVNRNPMKRALRVDKIRLAAIEATLKLYRDPDRLAERLPTLRLLARPLAEIEAQARRLLPAAAVAVEPAYQVALRLCRSQVGSGALPLDTIESAGLIIRPTNGSRSLERLAGALRALARPIIGRIEDGGLLLDLRCLTDEAGFLSSLSALDADALA.

Lysine 295 bears the N6-(pyridoxal phosphate)lysine mark.

Belongs to the SelA family. Pyridoxal 5'-phosphate is required as a cofactor.

The protein localises to the cytoplasm. It carries out the reaction L-seryl-tRNA(Sec) + selenophosphate + H(+) = L-selenocysteinyl-tRNA(Sec) + phosphate. The protein operates within aminoacyl-tRNA biosynthesis; selenocysteinyl-tRNA(Sec) biosynthesis; selenocysteinyl-tRNA(Sec) from L-seryl-tRNA(Sec) (bacterial route): step 1/1. Its function is as follows. Converts seryl-tRNA(Sec) to selenocysteinyl-tRNA(Sec) required for selenoprotein biosynthesis. This Methylocella silvestris (strain DSM 15510 / CIP 108128 / LMG 27833 / NCIMB 13906 / BL2) protein is L-seryl-tRNA(Sec) selenium transferase.